A 348-amino-acid chain; its full sequence is D-erythrose-4-phosphate dehydrogenase (348 aa).

12–13 contacts NAD(+); sequence RI. Residues 154-156, R200, 213-214, and R236 contribute to the substrate site; these read SCT and TR. Catalysis depends on C155, which acts as the Nucleophile. Residue N318 coordinates NAD(+).

Belongs to the glyceraldehyde-3-phosphate dehydrogenase family. Epd subfamily. As to quaternary structure, homotetramer.

It is found in the cytoplasm. It carries out the reaction D-erythrose 4-phosphate + NAD(+) + H2O = 4-phospho-D-erythronate + NADH + 2 H(+). It functions in the pathway cofactor biosynthesis; pyridoxine 5'-phosphate biosynthesis; pyridoxine 5'-phosphate from D-erythrose 4-phosphate: step 1/5. Its function is as follows. Catalyzes the NAD-dependent conversion of D-erythrose 4-phosphate to 4-phosphoerythronate. The sequence is that of D-erythrose-4-phosphate dehydrogenase from Erwinia tasmaniensis (strain DSM 17950 / CFBP 7177 / CIP 109463 / NCPPB 4357 / Et1/99).